Consider the following 165-residue polypeptide: Nascent polypeptide-associated complex subunit beta (165 aa).

Disordered stretches follow at residues 1-34 (MDQA…TSGA) and 133-165 (QNMQ…KSVD). Over residues 20–30 (TPRRKVKKVHK) the composition is skewed to basic residues. The NAC-A/B domain occupies 33–110 (GADDKKLQAT…GEEKELTELV (78 aa)). A compositionally biased stretch (acidic residues) spans 145–158 (DDDEDDIPDLVEGE).

The protein belongs to the NAC-beta family. In terms of assembly, part of the nascent polypeptide-associated complex (NAC), consisting of egd2 and egd1. NAC associates with ribosomes via egd1.

It is found in the cytoplasm. The protein localises to the nucleus. Component of the nascent polypeptide-associated complex (NAC), a dynamic component of the ribosomal exit tunnel, protecting the emerging polypeptides from interaction with other cytoplasmic proteins to ensure appropriate nascent protein targeting. The NAC complex also promotes mitochondrial protein import by enhancing productive ribosome interactions with the outer mitochondrial membrane and blocks the inappropriate interaction of ribosomes translating non-secretory nascent polypeptides with translocation sites in the membrane of the endoplasmic reticulum. EGD1 may act as a transcription factor that exert a negative effect on the expression of several genes that are transcribed by RNA polymerase II. The protein is Nascent polypeptide-associated complex subunit beta (egd1) of Emericella nidulans (strain FGSC A4 / ATCC 38163 / CBS 112.46 / NRRL 194 / M139) (Aspergillus nidulans).